We begin with the raw amino-acid sequence, 144 residues long: Putative pre-16S rRNA nuclease (144 aa).

Belongs to the YqgF nuclease family.

The protein resides in the cytoplasm. Its function is as follows. Could be a nuclease involved in processing of the 5'-end of pre-16S rRNA. This chain is Putative pre-16S rRNA nuclease, found in Picosynechococcus sp. (strain ATCC 27264 / PCC 7002 / PR-6) (Agmenellum quadruplicatum).